The sequence spans 146 residues: Cytochrome c-type biogenesis protein CcmE (146 aa).

Topologically, residues 1-8 are cytoplasmic; sequence MHPKRKKR. A helical; Signal-anchor for type II membrane protein transmembrane segment spans residues 9–29; that stretch reads LLIVLAGLAVVAVASGLILNA. Residues 30–146 lie on the Periplasmic side of the membrane; that stretch reads FRSNLVFFHT…IQRAGETVVQ (117 aa). Residues H124 and Y128 each coordinate heme.

Belongs to the CcmE/CycJ family.

It localises to the cell inner membrane. Functionally, heme chaperone required for the biogenesis of c-type cytochromes. Transiently binds heme delivered by CcmC and transfers the heme to apo-cytochromes in a process facilitated by CcmF and CcmH. The sequence is that of Cytochrome c-type biogenesis protein CcmE from Laribacter hongkongensis (strain HLHK9).